The following is a 550-amino-acid chain: Membrane protein insertase YidC (550 aa).

Residues 3–23 (IKRTVLWVIFFMSAVMLFDNW) form a helical membrane-spanning segment. A disordered region spans residues 34–73 (FPSATQTKTAAPAAPGSSTTASQPTDLPQTTAAAPGSTTP). The span at 35 to 73 (PSATQTKTAAPAAPGSSTTASQPTDLPQTTAAAPGSTTP) shows a compositional bias: low complexity. 4 helical membrane passes run 363–383 (WGWA…PLSA), 429–449 (FGGC…YWVL), 472–492 (PYFI…KLNP), and 503–523 (MMFM…GLVL).

It belongs to the OXA1/ALB3/YidC family. Type 1 subfamily. In terms of assembly, interacts with the Sec translocase complex via SecD. Specifically interacts with transmembrane segments of nascent integral membrane proteins during membrane integration.

It localises to the cell inner membrane. In terms of biological role, required for the insertion and/or proper folding and/or complex formation of integral membrane proteins into the membrane. Involved in integration of membrane proteins that insert both dependently and independently of the Sec translocase complex, as well as at least some lipoproteins. Aids folding of multispanning membrane proteins. The chain is Membrane protein insertase YidC from Paraburkholderia phymatum (strain DSM 17167 / CIP 108236 / LMG 21445 / STM815) (Burkholderia phymatum).